The following is a 481-amino-acid chain: Zinc finger CCCH domain-containing protein 4 (481 aa).

Residues 157-184 form a C3H1-type zinc finger; that stretch reads RNRAHVCSFFIRGECTRGAECPYRHEMP. The RRM domain occupies 228-301; the sequence is KTLYVGGLNS…QRLKLTWGRP (74 aa). The disordered stretch occupies residues 329–481; that stretch reads HNQPPPMQQY…DVSTATGSSQ (153 aa). Over residues 331-345 the composition is skewed to pro residues; the sequence is QPPPMQQYYMHPPPA. 2 stretches are compositionally biased toward low complexity: residues 369 to 389 and 399 to 410; these read AGGSSTENNGASSSSYMMPPH and YMPSPYQQQYPP. Over residues 423–444 the composition is skewed to pro residues; that stretch reads APPPAAYPYPQQPGPGSRPAPS. Residues 449–471 show a composition bias toward low complexity; sequence SAISPDSAPAGSGAPSGSSQQAP. Positions 472–481 are enriched in polar residues; that stretch reads DVSTATGSSQ.

The protein is Zinc finger CCCH domain-containing protein 4 of Arabidopsis thaliana (Mouse-ear cress).